A 555-amino-acid polypeptide reads, in one-letter code: Sulfite reductase [NADPH] hemoprotein beta-component (555 aa).

[4Fe-4S] cluster is bound by residues cysteine 430, cysteine 436, cysteine 475, and cysteine 479. Position 479 (cysteine 479) interacts with siroheme.

This sequence belongs to the nitrite and sulfite reductase 4Fe-4S domain family. As to quaternary structure, alpha(8)-beta(8). The alpha component is a flavoprotein, the beta component is a hemoprotein. Requires siroheme as cofactor. It depends on [4Fe-4S] cluster as a cofactor.

It carries out the reaction hydrogen sulfide + 3 NADP(+) + 3 H2O = sulfite + 3 NADPH + 4 H(+). Its pathway is sulfur metabolism; hydrogen sulfide biosynthesis; hydrogen sulfide from sulfite (NADPH route): step 1/1. In terms of biological role, component of the sulfite reductase complex that catalyzes the 6-electron reduction of sulfite to sulfide. This is one of several activities required for the biosynthesis of L-cysteine from sulfate. In Leptospira biflexa serovar Patoc (strain Patoc 1 / Ames), this protein is Sulfite reductase [NADPH] hemoprotein beta-component.